The chain runs to 182 residues: Large ribosomal subunit protein uL6 (182 aa).

Belongs to the universal ribosomal protein uL6 family. As to quaternary structure, part of the 50S ribosomal subunit.

This protein binds to the 23S rRNA, and is important in its secondary structure. It is located near the subunit interface in the base of the L7/L12 stalk, and near the tRNA binding site of the peptidyltransferase center. The sequence is that of Large ribosomal subunit protein uL6 from Nostoc punctiforme (strain ATCC 29133 / PCC 73102).